The primary structure comprises 57 residues: UPF0391 membrane protein AZOSEA39630 (57 aa).

2 consecutive transmembrane segments (helical) span residues 4-24 (WAIIFFVISVIAGLLGFTGVA) and 37-57 (IALAIFLIVLVFGVLLGVLVF).

This sequence belongs to the UPF0391 family.

Its subcellular location is the cell membrane. This chain is UPF0391 membrane protein AZOSEA39630, found in Aromatoleum aromaticum (strain DSM 19018 / LMG 30748 / EbN1) (Azoarcus sp. (strain EbN1)).